The chain runs to 274 residues: Rhamnulose-1-phosphate aldolase (274 aa).

Glu-117 is a catalytic residue. Zn(2+)-binding residues include His-141, His-143, and His-212.

Belongs to the aldolase class II family. RhaD subfamily. In terms of assembly, homotetramer. The cofactor is Zn(2+).

Its subcellular location is the cytoplasm. It catalyses the reaction L-rhamnulose 1-phosphate = (S)-lactaldehyde + dihydroxyacetone phosphate. It functions in the pathway carbohydrate degradation; L-rhamnose degradation; glycerone phosphate from L-rhamnose: step 3/3. Its function is as follows. Catalyzes the reversible cleavage of L-rhamnulose-1-phosphate to dihydroxyacetone phosphate (DHAP) and L-lactaldehyde. The chain is Rhamnulose-1-phosphate aldolase from Escherichia coli O17:K52:H18 (strain UMN026 / ExPEC).